The following is a 146-amino-acid chain: uncharacterized protein (146 aa).

In terms of domain architecture, HTH marR-type spans 1–137 (MLSQEFFNSF…TINVMNQIHE (137 aa)).

This is an uncharacterized protein from Staphylococcus aureus (strain MRSA252).